Reading from the N-terminus, the 435-residue chain is Hydrogenobyrinate a,c-diamide synthase (435 aa).

Residues 239–422 (RIGVARDASF…IHFYLPSNPQ (184 aa)) enclose the GATase cobBQ-type domain. Cysteine 321 acts as the Nucleophile in catalysis.

This sequence belongs to the CobB/CbiA family. Requires Mg(2+) as cofactor.

It carries out the reaction hydrogenobyrinate + 2 L-glutamine + 2 ATP + 2 H2O = hydrogenobyrinate a,c-diamide + 2 L-glutamate + 2 ADP + 2 phosphate + 2 H(+). It participates in cofactor biosynthesis; adenosylcobalamin biosynthesis; cob(II)yrinate a,c-diamide from precorrin-2 (aerobic route): step 9/10. Functionally, catalyzes the ATP-dependent amidation of the two carboxylate groups at positions a and c of hydrogenobyrinate, using either L-glutamine or ammonia as the nitrogen source. The protein is Hydrogenobyrinate a,c-diamide synthase of Pseudomonas aeruginosa (strain ATCC 15692 / DSM 22644 / CIP 104116 / JCM 14847 / LMG 12228 / 1C / PRS 101 / PAO1).